The chain runs to 278 residues: Bis(5'-nucleosyl)-tetraphosphatase, symmetrical (278 aa).

Belongs to the Ap4A hydrolase family.

It catalyses the reaction P(1),P(4)-bis(5'-adenosyl) tetraphosphate + H2O = 2 ADP + 2 H(+). Hydrolyzes diadenosine 5',5'''-P1,P4-tetraphosphate to yield ADP. The sequence is that of Bis(5'-nucleosyl)-tetraphosphatase, symmetrical from Buchnera aphidicola subsp. Baizongia pistaciae (strain Bp).